Consider the following 193-residue polypeptide: Probable DNA-directed RNA polymerase subunit delta (193 aa).

Residues 14–81 (LALVEIATAI…GNNEWGLRAW (68 aa)) enclose the HTH HARE-type domain. 2 stretches are compositionally biased toward acidic residues: residues 119 to 174 (DDDV…DDNL) and 182 to 193 (DLDDLSDGDIEK). The disordered stretch occupies residues 119 to 193 (DDDVIDYNDD…DDLSDGDIEK (75 aa)).

The protein belongs to the RpoE family. In terms of assembly, RNAP is composed of a core of 2 alpha, a beta and a beta' subunits. The core is associated with a delta subunit and one of several sigma factors.

In terms of biological role, participates in both the initiation and recycling phases of transcription. In the presence of the delta subunit, RNAP displays an increased specificity of transcription, a decreased affinity for nucleic acids, and an increased efficiency of RNA synthesis because of enhanced recycling. This chain is Probable DNA-directed RNA polymerase subunit delta, found in Leuconostoc citreum (strain KM20).